The following is a 167-amino-acid chain: RNA pyrophosphohydrolase (167 aa).

The region spanning 8 to 158 (PYRRNVGAML…KRDIYRTLVR (151 aa)) is the Nudix hydrolase domain. Residues 49–70 (GGIDADEDPEEAVLRELREEIG) carry the Nudix box motif.

It belongs to the Nudix hydrolase family. RppH subfamily. It depends on a divalent metal cation as a cofactor.

Its function is as follows. Accelerates the degradation of transcripts by removing pyrophosphate from the 5'-end of triphosphorylated RNA, leading to a more labile monophosphorylated state that can stimulate subsequent ribonuclease cleavage. This chain is RNA pyrophosphohydrolase, found in Gluconacetobacter diazotrophicus (strain ATCC 49037 / DSM 5601 / CCUG 37298 / CIP 103539 / LMG 7603 / PAl5).